We begin with the raw amino-acid sequence, 513 residues long: GTPase Obg (513 aa).

In terms of domain architecture, Obg spans 3 to 160 (THFVDRVVVH…LDLHLEVKTL (158 aa)). The 177-residue stretch at 161-337 (ADVALVGFPS…LSFAMAELVS (177 aa)) folds into the OBG-type G domain. Residues 167–174 (GFPSAGKS), 192–196 (FTTLV), 213–216 (DVPG), 289–292 (NKAD), and 318–320 (SAV) contribute to the GTP site. Serine 174 and threonine 194 together coordinate Mg(2+). Residues 355 to 444 (PRAVDDQGFK…ANAVVFDWEP (90 aa)) enclose the OCT domain. Residues 457–513 (GSDLRLEDHSRPTRDEKRLQERERRAAKVTARDELEAERRAGHWTAADEADEELSQR) are disordered. Over residues 458–497 (SDLRLEDHSRPTRDEKRLQERERRAAKVTARDELEAERRA) the composition is skewed to basic and acidic residues. The segment covering 504–513 (DEADEELSQR) has biased composition (acidic residues).

The protein belongs to the TRAFAC class OBG-HflX-like GTPase superfamily. OBG GTPase family. As to quaternary structure, monomer. Mg(2+) serves as cofactor.

It localises to the cytoplasm. An essential GTPase which binds GTP, GDP and possibly (p)ppGpp with moderate affinity, with high nucleotide exchange rates and a fairly low GTP hydrolysis rate. Plays a role in control of the cell cycle, stress response, ribosome biogenesis and in those bacteria that undergo differentiation, in morphogenesis control. The protein is GTPase Obg of Kineococcus radiotolerans (strain ATCC BAA-149 / DSM 14245 / SRS30216).